The chain runs to 751 residues: Cytosolic neutral trehalase (751 aa).

Positions 1-15 (MDDSALPSNTSNGIN) are enriched in polar residues. 2 disordered regions span residues 1-42 (MDDS…NPES) and 64-88 (DFHEMLGDRNTRRGSMDPTSGNPRK). Residues 64 to 78 (DFHEMLGDRNTRRGS) are compositionally biased toward basic and acidic residues. Asp105, Asp107, Asn109, Gln111, and Asp116 together coordinate Ca(2+). Residues Arg292, 299–300 (WD), Asn336, 345–347 (RSQ), Glu412, Arg461, and Gly464 contribute to the substrate site. Residues Asp466 and Glu670 each act as proton donor/acceptor in the active site.

The protein belongs to the glycosyl hydrolase 37 family. Ca(2+) is required as a cofactor.

It is found in the cytoplasm. It carries out the reaction alpha,alpha-trehalose + H2O = alpha-D-glucose + beta-D-glucose. Its pathway is carbohydrate degradation. With respect to regulation, activated by calcium. Its function is as follows. Hydrolyzes intracellular trehalose to glucose. The disaccharide trehalose serves as a storage carbohydrate that is mobilized during conidial germination. Regulates the level of trehalose as a protectant for cell integrity during heat stress. The chain is Cytosolic neutral trehalase from Emericella nidulans (strain FGSC A4 / ATCC 38163 / CBS 112.46 / NRRL 194 / M139) (Aspergillus nidulans).